The following is a 156-amino-acid chain: ATP synthase subunit b (156 aa).

The chain crosses the membrane as a helical span at residues 7-29; sequence LLGQAISFALFVWFCIKFVWPPL.

It belongs to the ATPase B chain family. F-type ATPases have 2 components, F(1) - the catalytic core - and F(0) - the membrane proton channel. F(1) has five subunits: alpha(3), beta(3), gamma(1), delta(1), epsilon(1). F(0) has three main subunits: a(1), b(2) and c(10-14). The alpha and beta chains form an alternating ring which encloses part of the gamma chain. F(1) is attached to F(0) by a central stalk formed by the gamma and epsilon chains, while a peripheral stalk is formed by the delta and b chains.

It localises to the cell inner membrane. In terms of biological role, f(1)F(0) ATP synthase produces ATP from ADP in the presence of a proton or sodium gradient. F-type ATPases consist of two structural domains, F(1) containing the extramembraneous catalytic core and F(0) containing the membrane proton channel, linked together by a central stalk and a peripheral stalk. During catalysis, ATP synthesis in the catalytic domain of F(1) is coupled via a rotary mechanism of the central stalk subunits to proton translocation. Functionally, component of the F(0) channel, it forms part of the peripheral stalk, linking F(1) to F(0). The protein is ATP synthase subunit b of Shewanella sp. (strain W3-18-1).